Consider the following 728-residue polypeptide: Polyribonucleotide nucleotidyltransferase (728 aa).

D489 and D495 together coordinate Mg(2+). Residues 556–615 (PKIDTIKIDVDKIKIVIGKGGETIDKIIAETGVKIDIDEEGNVSIYSSDQDAINRAKEII) enclose the KH domain. One can recognise an S1 motif domain in the interval 625-693 (DEVYHAKVVR…AKGRVDASMK (69 aa)). The disordered stretch occupies residues 691–728 (SMKALLPRPPKPEKSDKHHDKGHPHKKHEEAPLTQTEE). Basic and acidic residues predominate over residues 700-709 (PKPEKSDKHH).

This sequence belongs to the polyribonucleotide nucleotidyltransferase family. Mg(2+) serves as cofactor.

Its subcellular location is the cytoplasm. The catalysed reaction is RNA(n+1) + phosphate = RNA(n) + a ribonucleoside 5'-diphosphate. Involved in mRNA degradation. Catalyzes the phosphorolysis of single-stranded polyribonucleotides processively in the 3'- to 5'-direction. The sequence is that of Polyribonucleotide nucleotidyltransferase from Streptococcus gordonii (strain Challis / ATCC 35105 / BCRC 15272 / CH1 / DL1 / V288).